Consider the following 804-residue polypeptide: Phenylalanine--tRNA ligase beta subunit (804 aa).

In terms of domain architecture, tRNA-binding spans 40 to 161; it reads FSMIDYLIIG…KANLGDTEVY (122 aa). The B5 domain maps to 413-486; the sequence is EYHQQVKVNY…KILNINLFQP (74 aa). Residues aspartate 464, aspartate 470, glutamate 473, and glutamate 474 each coordinate Mg(2+). Residues 710–804 form the FDX-ACB domain; the sequence is DHYQEVTRDI…DLMKTKQILI (95 aa).

Belongs to the phenylalanyl-tRNA synthetase beta subunit family. Type 1 subfamily. In terms of assembly, tetramer of two alpha and two beta subunits. Mg(2+) is required as a cofactor.

It localises to the cytoplasm. The enzyme catalyses tRNA(Phe) + L-phenylalanine + ATP = L-phenylalanyl-tRNA(Phe) + AMP + diphosphate + H(+). The polypeptide is Phenylalanine--tRNA ligase beta subunit (Mycoplasmoides gallisepticum (strain R(low / passage 15 / clone 2)) (Mycoplasma gallisepticum)).